A 132-amino-acid polypeptide reads, in one-letter code: uncharacterized protein (132 aa).

4 consecutive transmembrane segments (helical) span residues 7–29 (LALLSFFLGLGSFFSFYVAPTLF), 44–62 (VFPVYFGLGIILVGISLFL), 69–88 (LFLSLGILNLLLLLLQEFIV), and 108–130 (GVSMGINLAILLLTLGKVLILIF).

It localises to the cell membrane. This is an uncharacterized protein from Aquifex aeolicus (strain VF5).